We begin with the raw amino-acid sequence, 640 residues long: Threonine--tRNA ligase (640 aa).

In terms of domain architecture, TGS spans 1 to 61 (MPIITLPDGS…TNDAEIQIIT (61 aa)). The segment at 242-533 (DHRKLGKKLS…LIENYSGNLP (292 aa)) is catalytic. Zn(2+) is bound by residues C333, H384, and H510.

It belongs to the class-II aminoacyl-tRNA synthetase family. As to quaternary structure, homodimer. Zn(2+) is required as a cofactor.

It localises to the cytoplasm. The enzyme catalyses tRNA(Thr) + L-threonine + ATP = L-threonyl-tRNA(Thr) + AMP + diphosphate + H(+). Its function is as follows. Catalyzes the attachment of threonine to tRNA(Thr) in a two-step reaction: L-threonine is first activated by ATP to form Thr-AMP and then transferred to the acceptor end of tRNA(Thr). Also edits incorrectly charged L-seryl-tRNA(Thr). This Prochlorococcus marinus (strain NATL1A) protein is Threonine--tRNA ligase.